The chain runs to 563 residues: uncharacterized protein (563 aa).

The zn(2)-C6 fungal-type DNA-binding region spans 19–45 (CLICRRRKVKCDRQQPCSRCKERNEVC). The disordered stretch occupies residues 56 to 78 (NVGPHPSHSENASDSETTLEVSP). Polar residues predominate over residues 64 to 75 (SENASDSETTLE).

Its subcellular location is the nucleus. This is an uncharacterized protein from Schizosaccharomyces pombe (strain 972 / ATCC 24843) (Fission yeast).